The following is a 152-amino-acid chain: UPF0756 membrane protein PEPE_1090 (152 aa).

A run of 4 helical transmembrane segments spans residues 4 to 24 (WLFLIGIFIVALLGKNQSLII), 52 to 72 (WGVTIISITILVPIATGKIGF), 85 to 105 (WIAVACGILVSLLSYQGVGFL), and 115 to 135 (LVMGTIIGVVFMNGIAAGPII).

Belongs to the UPF0756 family.

The protein resides in the cell membrane. The protein is UPF0756 membrane protein PEPE_1090 of Pediococcus pentosaceus (strain ATCC 25745 / CCUG 21536 / LMG 10740 / 183-1w).